Consider the following 838-residue polypeptide: Valine--tRNA ligase (838 aa).

The short motif at 46-56 (PNLTGTLHIGH) is the 'HIGH' region element. Residues 514 to 518 (KMSKS) carry the 'KMSKS' region motif. ATP is bound at residue lysine 517. Residues 768-838 (VDNAANNLAH…HLIAKLTKAE (71 aa)) are a coiled coil.

The protein belongs to the class-I aminoacyl-tRNA synthetase family. ValS type 1 subfamily. Monomer.

It localises to the cytoplasm. The enzyme catalyses tRNA(Val) + L-valine + ATP = L-valyl-tRNA(Val) + AMP + diphosphate. Its function is as follows. Catalyzes the attachment of valine to tRNA(Val). As ValRS can inadvertently accommodate and process structurally similar amino acids such as threonine, to avoid such errors, it has a 'posttransfer' editing activity that hydrolyzes mischarged Thr-tRNA(Val) in a tRNA-dependent manner. This is Valine--tRNA ligase from Mycoplasma pneumoniae (strain ATCC 29342 / M129 / Subtype 1) (Mycoplasmoides pneumoniae).